Consider the following 202-residue polypeptide: FMN-dependent NADH:quinone oxidoreductase 2 (202 aa).

Residues serine 9, serine 15–serine 17, and methionine 95–leucine 98 contribute to the FMN site.

The protein belongs to the azoreductase type 1 family. Homodimer. The cofactor is FMN.

It catalyses the reaction 2 a quinone + NADH + H(+) = 2 a 1,4-benzosemiquinone + NAD(+). The catalysed reaction is N,N-dimethyl-1,4-phenylenediamine + anthranilate + 2 NAD(+) = 2-(4-dimethylaminophenyl)diazenylbenzoate + 2 NADH + 2 H(+). In terms of biological role, quinone reductase that provides resistance to thiol-specific stress caused by electrophilic quinones. Its function is as follows. Also exhibits azoreductase activity. Catalyzes the reductive cleavage of the azo bond in aromatic azo compounds to the corresponding amines. The chain is FMN-dependent NADH:quinone oxidoreductase 2 from Hahella chejuensis (strain KCTC 2396).